A 236-amino-acid polypeptide reads, in one-letter code: 2,3,4,5-tetrahydropyridine-2,6-dicarboxylate N-acetyltransferase (236 aa).

The protein belongs to the transferase hexapeptide repeat family. DapH subfamily.

The catalysed reaction is (S)-2,3,4,5-tetrahydrodipicolinate + acetyl-CoA + H2O = L-2-acetamido-6-oxoheptanedioate + CoA. It participates in amino-acid biosynthesis; L-lysine biosynthesis via DAP pathway; LL-2,6-diaminopimelate from (S)-tetrahydrodipicolinate (acetylase route): step 1/3. Functionally, catalyzes the transfer of an acetyl group from acetyl-CoA to tetrahydrodipicolinate. The protein is 2,3,4,5-tetrahydropyridine-2,6-dicarboxylate N-acetyltransferase of Listeria ivanovii.